A 740-amino-acid chain; its full sequence is Polyribonucleotide nucleotidyltransferase (740 aa).

The Mg(2+) site is built by Asp-496 and Asp-502. Residues 563–622 (PAIIRTSIHPDKIRDIIGPGGKIIKKLVEETGADIDIEDDGRVFIAAVDREKGKRALEII) form the KH domain. The S1 motif domain occupies 632–706 (GKLYNGKVTR…QQGRLKLSKK (75 aa)). Residues 707–740 (EAMRDMGLAPAESTSEQPEKRERRPFSRPKATKE) form a disordered region. The span at 723–740 (QPEKRERRPFSRPKATKE) shows a compositional bias: basic and acidic residues.

It belongs to the polyribonucleotide nucleotidyltransferase family. The cofactor is Mg(2+).

It is found in the cytoplasm. The catalysed reaction is RNA(n+1) + phosphate = RNA(n) + a ribonucleoside 5'-diphosphate. Its function is as follows. Involved in mRNA degradation. Catalyzes the phosphorolysis of single-stranded polyribonucleotides processively in the 3'- to 5'-direction. In Desulforamulus reducens (strain ATCC BAA-1160 / DSM 100696 / MI-1) (Desulfotomaculum reducens), this protein is Polyribonucleotide nucleotidyltransferase.